The following is a 324-amino-acid chain: 4-hydroxybenzoyl-CoA reductase subunit beta (324 aa).

Positions 2–217 (NILTDFRTHR…AAIEVPPTGA (216 aa)) constitute an FAD-binding PCMH-type domain. FAD contacts are provided by residues 29–36 (PLGAGTDL), Thr111, Asn115, and Gln118. Residues Cys122, Cys138, Cys146, and Cys155 each contribute to the [4Fe-4S] cluster site. Residues Asp162 and Lys224 each contribute to the FAD site.

As to quaternary structure, heterohexamer of two alpha, two beta and two gamma subunits. Requires FAD as cofactor. [4Fe-4S] cluster serves as cofactor.

It carries out the reaction oxidized 2[4Fe-4S]-[ferredoxin] + benzoyl-CoA + H2O = 4-hydroxybenzoyl-CoA + reduced 2[4Fe-4S]-[ferredoxin] + 2 H(+). Inactivated by low concentrations of cyanide in vitro. Component of a complex that catalyzes the reductive dehydroxylation of 4-hydroxybenzoyl-CoA to benzoyl-CoA. Reaction is not reversible. Is a key enzyme in the anaerobic degradation of phenolic compounds. The protein is 4-hydroxybenzoyl-CoA reductase subunit beta (hcrB) of Thauera aromatica.